Here is a 185-residue protein sequence, read N- to C-terminus: Elongation factor P (185 aa).

This sequence belongs to the elongation factor P family.

Its subcellular location is the cytoplasm. The protein operates within protein biosynthesis; polypeptide chain elongation. Involved in peptide bond synthesis. Stimulates efficient translation and peptide-bond synthesis on native or reconstituted 70S ribosomes in vitro. Probably functions indirectly by altering the affinity of the ribosome for aminoacyl-tRNA, thus increasing their reactivity as acceptors for peptidyl transferase. The chain is Elongation factor P from Limosilactobacillus fermentum (strain NBRC 3956 / LMG 18251) (Lactobacillus fermentum).